A 216-amino-acid chain; its full sequence is Phosphatidylserine decarboxylase proenzyme (216 aa).

The active-site Schiff-base intermediate with substrate; via pyruvic acid is the S182. S182 is modified (pyruvic acid (Ser); by autocatalysis).

The protein belongs to the phosphatidylserine decarboxylase family. PSD-A subfamily. As to quaternary structure, heterodimer of a large membrane-associated beta subunit and a small pyruvoyl-containing alpha subunit. Pyruvate is required as a cofactor. Post-translationally, is synthesized initially as an inactive proenzyme. Formation of the active enzyme involves a self-maturation process in which the active site pyruvoyl group is generated from an internal serine residue via an autocatalytic post-translational modification. Two non-identical subunits are generated from the proenzyme in this reaction, and the pyruvate is formed at the N-terminus of the alpha chain, which is derived from the carboxyl end of the proenzyme. The post-translation cleavage follows an unusual pathway, termed non-hydrolytic serinolysis, in which the side chain hydroxyl group of the serine supplies its oxygen atom to form the C-terminus of the beta chain, while the remainder of the serine residue undergoes an oxidative deamination to produce ammonia and the pyruvoyl prosthetic group on the alpha chain.

It localises to the cell membrane. It catalyses the reaction a 1,2-diacyl-sn-glycero-3-phospho-L-serine + H(+) = a 1,2-diacyl-sn-glycero-3-phosphoethanolamine + CO2. It functions in the pathway phospholipid metabolism; phosphatidylethanolamine biosynthesis; phosphatidylethanolamine from CDP-diacylglycerol: step 2/2. In terms of biological role, catalyzes the formation of phosphatidylethanolamine (PtdEtn) from phosphatidylserine (PtdSer). The protein is Phosphatidylserine decarboxylase proenzyme of Burkholderia pseudomallei (strain 1106a).